Consider the following 521-residue polypeptide: Bifunctional purine biosynthesis protein PurH (521 aa).

Residues Met1 to Val145 enclose the MGS-like domain.

It belongs to the PurH family.

The enzyme catalyses (6R)-10-formyltetrahydrofolate + 5-amino-1-(5-phospho-beta-D-ribosyl)imidazole-4-carboxamide = 5-formamido-1-(5-phospho-D-ribosyl)imidazole-4-carboxamide + (6S)-5,6,7,8-tetrahydrofolate. It carries out the reaction IMP + H2O = 5-formamido-1-(5-phospho-D-ribosyl)imidazole-4-carboxamide. It participates in purine metabolism; IMP biosynthesis via de novo pathway; 5-formamido-1-(5-phospho-D-ribosyl)imidazole-4-carboxamide from 5-amino-1-(5-phospho-D-ribosyl)imidazole-4-carboxamide (10-formyl THF route): step 1/1. The protein operates within purine metabolism; IMP biosynthesis via de novo pathway; IMP from 5-formamido-1-(5-phospho-D-ribosyl)imidazole-4-carboxamide: step 1/1. This is Bifunctional purine biosynthesis protein PurH from Burkholderia orbicola (strain AU 1054).